Consider the following 158-residue polypeptide: NAD(P)H-quinone oxidoreductase subunit N (158 aa).

Belongs to the complex I NdhN subunit family. NDH-1 can be composed of about 15 different subunits; different subcomplexes with different compositions have been identified which probably have different functions.

It is found in the cellular thylakoid membrane. The catalysed reaction is a plastoquinone + NADH + (n+1) H(+)(in) = a plastoquinol + NAD(+) + n H(+)(out). It carries out the reaction a plastoquinone + NADPH + (n+1) H(+)(in) = a plastoquinol + NADP(+) + n H(+)(out). Functionally, NDH-1 shuttles electrons from an unknown electron donor, via FMN and iron-sulfur (Fe-S) centers, to quinones in the respiratory and/or the photosynthetic chain. The immediate electron acceptor for the enzyme in this species is believed to be plastoquinone. Couples the redox reaction to proton translocation, and thus conserves the redox energy in a proton gradient. Cyanobacterial NDH-1 also plays a role in inorganic carbon-concentration. The chain is NAD(P)H-quinone oxidoreductase subunit N from Cyanothece sp. (strain PCC 7425 / ATCC 29141).